A 413-amino-acid chain; its full sequence is Peptide chain release factor 1, mitochondrial (413 aa).

The residue at position 287 (glutamine 287) is an N5-methylglutamine. Residues 335-363 (RLEKEEKERKARKSQVSSTNRSDKIRTYN) form a disordered region.

The protein belongs to the prokaryotic/mitochondrial release factor family. Post-translationally, methylation of glutamine in the GGQ triplet is conserved from bacteria to mammals. N5-methylated on Gln-287 by MTQ1.

It localises to the mitochondrion. Functionally, mitochondrial peptide chain release factor that directs the termination of translation in response to the peptide chain termination codons UAA and UAG. The sequence is that of Peptide chain release factor 1, mitochondrial (MRF1) from Saccharomyces cerevisiae (strain ATCC 204508 / S288c) (Baker's yeast).